The primary structure comprises 463 residues: Elongation factor 1-alpha (463 aa).

Gly2 is subject to N,N,N-trimethylglycine. Lys3 is subject to N6,N6-dimethyllysine; alternate. An N6-methyllysine; alternate modification is found at Lys3. Residues 5 to 239 (KNHVNVVVIG…DAIEPPSRPT (235 aa)) form the tr-type G domain. Residues 14-21 (GHVDSGKS) form a G1 region. 14-21 (GHVDSGKS) is a binding site for GTP. Lys30 carries the N6-methyllysine modification. Residues 70 to 74 (GITID) are G2. Lys79 carries the post-translational modification N6,N6,N6-trimethyllysine. Positions 91 to 94 (DAPG) are G3. GTP contacts are provided by residues 91-95 (DAPGH) and 153-156 (NKMD). The G4 stretch occupies residues 153-156 (NKMD). Residues 191–193 (SGW) form a G5 region. Lys315 carries the N6,N6-dimethyllysine; alternate modification. Lys315 carries the N6-methyllysine; alternate modification. Lys389 is subject to N6-methyllysine.

Belongs to the TRAFAC class translation factor GTPase superfamily. Classic translation factor GTPase family. EF-Tu/EF-1A subfamily.

Its subcellular location is the cytoplasm. Its function is as follows. This protein promotes the GTP-dependent binding of aminoacyl-tRNA to the A-site of ribosomes during protein biosynthesis. This is Elongation factor 1-alpha (TEF) from Puccinia graminis (Black stem rust fungus).